The sequence spans 95 residues: LSM complex subunit LSM2 (95 aa).

The 75-residue stretch at 2 to 76 (LFFSFFKTLV…VRYVYLNKNM (75 aa)) folds into the Sm domain.

The protein belongs to the snRNP Sm proteins family. In terms of assembly, component of the heptameric LSM1-LSM7 complex that forms a seven-membered ring structure with a donut shape. The LSm subunits are arranged in the order LSM1, LSM2, LSM3, LSM6, LSM5, LSM7 and LSM4. Except for LSM1, where a C-terminal helix crosses the ring structure to form additional interactions with LSM3 and LSM6, each subunit interacts only with its two neighboring subunits. The LSM1-LSM7 complex interacts with PAT1; within the complex PAT1 has direct interactions with LSM2 and LSM3. The LSM1-LSM7 complex interacts with XRN1. Component of the heptameric LSM2-LSM8 complex that forms a seven-membered ring structure with a donut shape; an RNA strand can pass through the hole in the center of the ring structure. The LSm subunits are arranged in the order LSM8, LSM2, LSM3, LSM6, LSM5, LSM7 and LSM4. Interacts with U6 snRNA SNR6 and chaperone PRP24; to promote formation of the U4/U6-U5 tri-snRNP (small nuclear ribonucleoprotein) complex, the LSM2-LSM8 complex preferentially binds U6 snRNA that has been modified to contain a non-cyclic 3' phosphate. Component of the spliceosome U4/U6-U5 tri-snRNP complex composed of the U4, U6 and U5 snRNAs and at least PRP3, PRP4, PRP6, PRP8, PRP18, PRP31, PRP38, SNU13, SNU23, SNU66, SNU114, SPP381, SMB1, SMD1, SMD2, SMD3, SMX2, SMX3, LSM2, LSM3, LSM4, LSM5, LSM6, LSM7, LSM8, BRR2 and DIB1. May be found in a complex comprising LSM2-LSM7 without LSM1 or LSM8; the complex associates with pre-P RNA and snoRNA SNR5.

It is found in the nucleus. The protein resides in the nucleolus. The protein localises to the cytoplasm. Its function is as follows. Component of LSm protein complexes, which are involved in RNA processing and may function in a chaperone-like manner. Component of the cytoplasmic LSM1-LSM7 complex which is involved in mRNA degradation by activating the decapping step. Together with PAT1, the LSM1-LSM7 complex binds to osmotic stress-activated mRNAs to attenuate the osmotic stress response, probably by limiting ribosome access to the mRNA and consequently translation. Component of the nuclear LSM2-LSM8 complex, which is involved in spliceosome assembly. The LSM2-LSM8 complex plays a role in the biogenesis of the spliceosomal U4/U6-U5 tri-snRNP complex by accelerating PRP24-mediated annealing of U4/U6 di-snRNA. The LSM2-LSM8 complex binds U6 snRNA terminating with a non-cyclic 3' phosphate group. LSM2-LSM8 is probably also involved in degradation of nuclear pre-mRNA by targeting them for decapping. LSM2-LSM8 could be involved in processing of pre-tRNAs, pre-rRNAs and U3 snoRNA, although involvement may be indirect. In a complex that probably contains LSM2-LSM7, but not LSM1 or LSM8, associates with the precursor of the RNA component of RNase P (pre-P RNA) and may be involved in maturing pre-P RNA; the complex also associates with snoRNA SNR5. The chain is LSM complex subunit LSM2 (LSM2) from Saccharomyces cerevisiae (strain ATCC 204508 / S288c) (Baker's yeast).